The sequence spans 384 residues: Dual-specificity RNA methyltransferase RlmN (384 aa).

Glu105 serves as the catalytic Proton acceptor. Residues 111–350 form the Radical SAM core domain; sequence EDDRATLCVS…TIVRKTRGDD (240 aa). A disulfide bond links Cys118 and Cys355. Positions 125, 129, and 132 each coordinate [4Fe-4S] cluster. Residues 179-180, Ser211, 233-235, and Asn312 each bind S-adenosyl-L-methionine; these read GE and SLH. Cys355 acts as the S-methylcysteine intermediate in catalysis.

It belongs to the radical SAM superfamily. RlmN family. [4Fe-4S] cluster serves as cofactor.

The protein resides in the cytoplasm. The catalysed reaction is adenosine(2503) in 23S rRNA + 2 reduced [2Fe-2S]-[ferredoxin] + 2 S-adenosyl-L-methionine = 2-methyladenosine(2503) in 23S rRNA + 5'-deoxyadenosine + L-methionine + 2 oxidized [2Fe-2S]-[ferredoxin] + S-adenosyl-L-homocysteine. The enzyme catalyses adenosine(37) in tRNA + 2 reduced [2Fe-2S]-[ferredoxin] + 2 S-adenosyl-L-methionine = 2-methyladenosine(37) in tRNA + 5'-deoxyadenosine + L-methionine + 2 oxidized [2Fe-2S]-[ferredoxin] + S-adenosyl-L-homocysteine. Its function is as follows. Specifically methylates position 2 of adenine 2503 in 23S rRNA and position 2 of adenine 37 in tRNAs. m2A2503 modification seems to play a crucial role in the proofreading step occurring at the peptidyl transferase center and thus would serve to optimize ribosomal fidelity. In Escherichia coli O157:H7, this protein is Dual-specificity RNA methyltransferase RlmN.